A 121-amino-acid polypeptide reads, in one-letter code: MARVKRGVTSHAKHKKVLKAAKGYYGRRKNTIRIAKQAVEKGLQYAYRDRKNKKRTFRALWIQRLNAAVREHGLTYSRFINALAKSGIEVDRKALSELAIHEPAAFAAVVEKAKSALPKAA.

Belongs to the bacterial ribosomal protein bL20 family.

Binds directly to 23S ribosomal RNA and is necessary for the in vitro assembly process of the 50S ribosomal subunit. It is not involved in the protein synthesizing functions of that subunit. In Methylorubrum populi (strain ATCC BAA-705 / NCIMB 13946 / BJ001) (Methylobacterium populi), this protein is Large ribosomal subunit protein bL20.